The primary structure comprises 252 residues: L-aspartate dehydrogenase (252 aa).

NAD(+) is bound by residues Ala-119 and Asn-175. The active site involves His-203.

The protein belongs to the L-aspartate dehydrogenase family.

It catalyses the reaction L-aspartate + NADP(+) + H2O = oxaloacetate + NH4(+) + NADPH + H(+). The catalysed reaction is L-aspartate + NAD(+) + H2O = oxaloacetate + NH4(+) + NADH + H(+). It participates in cofactor biosynthesis; NAD(+) biosynthesis; iminoaspartate from L-aspartate (dehydrogenase route): step 1/1. Specifically catalyzes the NAD or NADP-dependent dehydrogenation of L-aspartate to iminoaspartate. The sequence is that of L-aspartate dehydrogenase from Methanospirillum hungatei JF-1 (strain ATCC 27890 / DSM 864 / NBRC 100397 / JF-1).